A 243-amino-acid chain; its full sequence is Uridylate kinase (243 aa).

An ATP-binding site is contributed by 15 to 18; the sequence is KLSG. Positions 23 to 28 are involved in allosteric activation by GTP; sequence GSEGFG. Residue Gly-57 participates in UMP binding. Residues Gly-58 and Arg-62 each contribute to the ATP site. UMP is bound by residues Asp-77 and 138–145; that span reads TGNPFFTT. Positions 165, 171, and 174 each coordinate ATP.

The protein belongs to the UMP kinase family. Homohexamer.

The protein localises to the cytoplasm. It carries out the reaction UMP + ATP = UDP + ADP. It participates in pyrimidine metabolism; CTP biosynthesis via de novo pathway; UDP from UMP (UMPK route): step 1/1. With respect to regulation, allosterically activated by GTP. Inhibited by UTP. In terms of biological role, catalyzes the reversible phosphorylation of UMP to UDP. The protein is Uridylate kinase of Vibrio cholerae serotype O1 (strain ATCC 39541 / Classical Ogawa 395 / O395).